The chain runs to 316 residues: 4-hydroxy-3-methylbut-2-enyl diphosphate reductase (316 aa).

[4Fe-4S] cluster is bound at residue cysteine 12. Positions 41 and 74 each coordinate (2E)-4-hydroxy-3-methylbut-2-enyl diphosphate. Positions 41 and 74 each coordinate dimethylallyl diphosphate. Residues histidine 41 and histidine 74 each contribute to the isopentenyl diphosphate site. Cysteine 96 is a [4Fe-4S] cluster binding site. Histidine 124 provides a ligand contact to (2E)-4-hydroxy-3-methylbut-2-enyl diphosphate. Residue histidine 124 participates in dimethylallyl diphosphate binding. Residue histidine 124 coordinates isopentenyl diphosphate. Glutamate 126 serves as the catalytic Proton donor. Threonine 167 is a binding site for (2E)-4-hydroxy-3-methylbut-2-enyl diphosphate. Position 197 (cysteine 197) interacts with [4Fe-4S] cluster. (2E)-4-hydroxy-3-methylbut-2-enyl diphosphate is bound by residues serine 225, serine 226, asparagine 227, and serine 269. Residues serine 225, serine 226, asparagine 227, and serine 269 each contribute to the dimethylallyl diphosphate site. Positions 225, 226, 227, and 269 each coordinate isopentenyl diphosphate.

This sequence belongs to the IspH family. Homodimer. Requires [4Fe-4S] cluster as cofactor.

The catalysed reaction is isopentenyl diphosphate + 2 oxidized [2Fe-2S]-[ferredoxin] + H2O = (2E)-4-hydroxy-3-methylbut-2-enyl diphosphate + 2 reduced [2Fe-2S]-[ferredoxin] + 2 H(+). The enzyme catalyses dimethylallyl diphosphate + 2 oxidized [2Fe-2S]-[ferredoxin] + H2O = (2E)-4-hydroxy-3-methylbut-2-enyl diphosphate + 2 reduced [2Fe-2S]-[ferredoxin] + 2 H(+). It participates in isoprenoid biosynthesis; dimethylallyl diphosphate biosynthesis; dimethylallyl diphosphate from (2E)-4-hydroxy-3-methylbutenyl diphosphate: step 1/1. The protein operates within isoprenoid biosynthesis; isopentenyl diphosphate biosynthesis via DXP pathway; isopentenyl diphosphate from 1-deoxy-D-xylulose 5-phosphate: step 6/6. Its function is as follows. Catalyzes the conversion of 1-hydroxy-2-methyl-2-(E)-butenyl 4-diphosphate (HMBPP) into a mixture of isopentenyl diphosphate (IPP) and dimethylallyl diphosphate (DMAPP). Acts in the terminal step of the DOXP/MEP pathway for isoprenoid precursor biosynthesis. This chain is 4-hydroxy-3-methylbut-2-enyl diphosphate reductase, found in Escherichia coli O6:H1 (strain CFT073 / ATCC 700928 / UPEC).